The sequence spans 558 residues: MAARQQTKHLFVTGGVASSLGKGLTASSLGNLLKARGLRVTMQKLDPYLNVDPGTMNPFQHGEVFVTDDGAETDLDIGHYERFLDTDLNGSANVTTGQIYSSVIAKERRGEYLGDTVQVIPHITNEIKDRIRGMAGRDVDVVITEIGGTVGDIESLPFLEAARQIRHEVGRDNVFFLHVSLLPYIGPSGELKTKPTQHSVAALRQVGITPDAIVCRADRPIPPNVKKKVSLMCDVDEEAVISAVDAPSIYDIPKVLHAEGLDAYVVRRLGLPFRDVDWTQWDELLRRVHDPANRVTIALVGKYVDLPDAYLSVIEALRAGGIANDAGVDVRWVASDTCETPGGAAKALQNVDGVVVPGGFGVRGIEGKLGALRYTRENGIPTLGLCLGLQCMVVEFARNVIGLAGANSTEFDPATPYPVIATMADQMEVVAGRRDMGGTMRLGSYPAILAPETLVHELYGCLEVRERHRHRYEVNNAYRQQLEAAGLVISGTSPDGQLVEFVELPRSVHPFYVATQAHPELRSRPTRPHPLFTGLIRAALLHRCPPIPLDTEPVPTAR.

Residues 1-271 (MAARQQTKHL…DAYVVRRLGL (271 aa)) are amidoligase domain. Ser18 contributes to the CTP binding site. Ser18 serves as a coordination point for UTP. ATP is bound by residues 19-24 (SLGKGL) and Asp76. The Mg(2+) site is built by Asp76 and Glu145. CTP is bound by residues 152-154 (DIE), 192-197 (KTKPTQ), and Lys228. Residues 192–197 (KTKPTQ) and Lys228 contribute to the UTP site. Residues 296 to 545 (TIALVGKYVD…IRAALLHRCP (250 aa)) enclose the Glutamine amidotransferase type-1 domain. Gly359 is an L-glutamine binding site. Cys386 functions as the Nucleophile; for glutamine hydrolysis in the catalytic mechanism. L-glutamine is bound by residues 387–390 (LGLQ), Glu410, and Arg471. Catalysis depends on residues His518 and Glu520.

This sequence belongs to the CTP synthase family. As to quaternary structure, homotetramer.

It carries out the reaction UTP + L-glutamine + ATP + H2O = CTP + L-glutamate + ADP + phosphate + 2 H(+). It catalyses the reaction L-glutamine + H2O = L-glutamate + NH4(+). The enzyme catalyses UTP + NH4(+) + ATP = CTP + ADP + phosphate + 2 H(+). Its pathway is pyrimidine metabolism; CTP biosynthesis via de novo pathway; CTP from UDP: step 2/2. Its activity is regulated as follows. Allosterically activated by GTP, when glutamine is the substrate; GTP has no effect on the reaction when ammonia is the substrate. The allosteric effector GTP functions by stabilizing the protein conformation that binds the tetrahedral intermediate(s) formed during glutamine hydrolysis. Inhibited by the product CTP, via allosteric rather than competitive inhibition. Catalyzes the ATP-dependent amination of UTP to CTP with either L-glutamine or ammonia as the source of nitrogen. Regulates intracellular CTP levels through interactions with the four ribonucleotide triphosphates. This Acidothermus cellulolyticus (strain ATCC 43068 / DSM 8971 / 11B) protein is CTP synthase.